The following is a 1130-amino-acid chain: Roquin-1 (1130 aa).

C14, C17, C33, H35, C38, C50, and D53 together coordinate Zn(2+). Residues 14–54 (CPICTQTFDETIRKPISLGCGHTVCKMCLNKLHRKACPFDQ) form an RING-type; degenerate zinc finger. The HEPN-N stretch occupies residues 128-176 (VLSRPMQRKLVTLVHCQLVEEEGRIRAMRAARSLGERTVTELILQHQNP). Residues 177 to 326 (QQLSSNLWAA…MQSIIDKLQT (150 aa)) form an ROQ region. The tract at residues 327–399 (PASFAQSVQE…GLVDYIQNHS (73 aa)) is HEPN-C. The C3H1-type zinc finger occupies 413–441 (KYKTYMCRDMKQRGGCPRGASCTFAHSQE). S462 is subject to Phosphoserine. 2 disordered regions span residues 493–567 (LPNG…DLPP) and 722–750 (PHPAQIRPSYPRDPPYSRLPPPQPHPSLD). The segment covering 497 to 506 (IASSGSTVTQ) has biased composition (polar residues). S531 and S535 each carry phosphoserine. 2 stretches are compositionally biased toward pro residues: residues 553 to 567 (NPHPVPPRGPTDLPP) and 732 to 746 (PRDPPYSRLPPPQPH). S861, S1107, and S1110 each carry phosphoserine. Positions 1100–1130 (KTSSLNLSEDSEGGGDNNDSQRSGVVSNSAP) are disordered. Residues 1116 to 1130 (NNDSQRSGVVSNSAP) show a composition bias toward polar residues.

Interacts with DDX6 and EDC4. Interacts with CCR4-NOT deadenylase complex. Interacts with RC3H1; the interaction is RNA independent. Proteolytically cleaved after Arg-510 and Arg-579 by MALT1 in activated CD4(+) T cells; cleavage at Arg-510 and Arg-579 is critical for promoting RC3H1 degradation in response to T-cell receptor (TCR) stimulation, and hence is necessary for prolonging the stability of a set of mRNAs controlling Th17 cell differentiation. Widely expressed, with highest levels in lymph node and thymus and slightly lesser amounts in brain, lung, and spleen (at protein level). Very weak expression in heart, muscle, and kidney (at protein level). Expressed in CD4(+) helper T-cells (at protein level).

The protein resides in the cytoplasm. It is found in the P-body. The protein localises to the cytoplasmic granule. The catalysed reaction is S-ubiquitinyl-[E2 ubiquitin-conjugating enzyme]-L-cysteine + [acceptor protein]-L-lysine = [E2 ubiquitin-conjugating enzyme]-L-cysteine + N(6)-ubiquitinyl-[acceptor protein]-L-lysine.. The protein operates within protein modification; protein ubiquitination. In terms of biological role, post-transcriptional repressor of mRNAs containing a conserved stem loop motif, called constitutive decay element (CDE), which is often located in the 3'-UTR, as in HMGXB3, ICOS, IER3, NFKBID, NFKBIZ, PPP1R10, TNF, TNFRSF4 and in many more mRNAs. Cleaves translationally inactive mRNAs harboring a stem-loop (SL), often located in their 3'-UTRs, during the early phase of inflammation in a helicase UPF1-independent manner. Binds to CDE and promotes mRNA deadenylation and degradation. This process does not involve miRNAs. In follicular helper T (Tfh) cells, represses of ICOS and TNFRSF4/Ox40 expression, thus preventing spontaneous Tfh cell differentiation, germinal center B-cell differentiation in the absence of immunization and autoimmunity. In resting or LPS-stimulated macrophages, controls inflammation by suppressing TNF expression. Also recognizes CDE in its own mRNA and in that of paralogous RC3H2, possibly leading to feedback loop regulation. Inhibits cooperatively with ZC3H12A the differentiation of helper T cells Th17 in lungs. They repress target mRNA encoding the Th17 cell-promoting factors IL6, ICOS, REL, IRF4, NFKBID and NFKBIZ. The cooperation requires RNA-binding by RC3H1 and the nuclease activity of ZC3H12A. Recognizes and binds mRNAs containing a hexaloop stem-loop motif, called alternative decay element (ADE). Together with ZC3H12A, destabilizes TNFRSF4/OX40 mRNA by binding to the conserved stem loop structure in its 3'UTR. Able to interact with double-stranded RNA. miRNA-binding protein that regulates microRNA homeostasis. Enhances DICER-mediated processing of pre-MIR146a but reduces mature MIR146a levels through an increase of 3' end uridylation. Both inhibits ICOS mRNA expression and they may act together to exert the suppression. Acts as a ubiquitin E3 ligase. Pairs with E2 enzymes UBE2A, UBE2B, UBE2D2, UBE2F, UBE2G1, UBE2G2 and UBE2L3 and produces polyubiquitin chains. Shows the strongest activity when paired with UBE2N:UBE2V1 or UBE2N:UBE2V2 E2 complexes and generate both short and long polyubiquitin chains. The protein is Roquin-1 of Mus musculus (Mouse).